Reading from the N-terminus, the 405-residue chain is 4-hydroxy-3-methylbut-2-enyl diphosphate reductase (405 aa).

C66 is a binding site for [4Fe-4S] cluster. A (2E)-4-hydroxy-3-methylbut-2-enyl diphosphate-binding site is contributed by H96. Position 96 (H96) interacts with dimethylallyl diphosphate. An isopentenyl diphosphate-binding site is contributed by H96. C157 lines the [4Fe-4S] cluster pocket. Residue H185 participates in (2E)-4-hydroxy-3-methylbut-2-enyl diphosphate binding. H185 provides a ligand contact to dimethylallyl diphosphate. Position 185 (H185) interacts with isopentenyl diphosphate. The active-site Proton donor is the E187. T250 serves as a coordination point for (2E)-4-hydroxy-3-methylbut-2-enyl diphosphate. Residue C288 coordinates [4Fe-4S] cluster. Positions 317, 318, 319, and 380 each coordinate (2E)-4-hydroxy-3-methylbut-2-enyl diphosphate. The dimethylallyl diphosphate site is built by S317, S318, N319, and S380. Positions 317, 318, 319, and 380 each coordinate isopentenyl diphosphate.

The protein belongs to the IspH family. [4Fe-4S] cluster serves as cofactor.

The catalysed reaction is isopentenyl diphosphate + 2 oxidized [2Fe-2S]-[ferredoxin] + H2O = (2E)-4-hydroxy-3-methylbut-2-enyl diphosphate + 2 reduced [2Fe-2S]-[ferredoxin] + 2 H(+). It catalyses the reaction dimethylallyl diphosphate + 2 oxidized [2Fe-2S]-[ferredoxin] + H2O = (2E)-4-hydroxy-3-methylbut-2-enyl diphosphate + 2 reduced [2Fe-2S]-[ferredoxin] + 2 H(+). It functions in the pathway isoprenoid biosynthesis; dimethylallyl diphosphate biosynthesis; dimethylallyl diphosphate from (2E)-4-hydroxy-3-methylbutenyl diphosphate: step 1/1. It participates in isoprenoid biosynthesis; isopentenyl diphosphate biosynthesis via DXP pathway; isopentenyl diphosphate from 1-deoxy-D-xylulose 5-phosphate: step 6/6. Its function is as follows. Catalyzes the conversion of 1-hydroxy-2-methyl-2-(E)-butenyl 4-diphosphate (HMBPP) into a mixture of isopentenyl diphosphate (IPP) and dimethylallyl diphosphate (DMAPP). Acts in the terminal step of the DOXP/MEP pathway for isoprenoid precursor biosynthesis. This chain is 4-hydroxy-3-methylbut-2-enyl diphosphate reductase, found in Prochlorococcus marinus (strain SARG / CCMP1375 / SS120).